Here is a 327-residue protein sequence, read N- to C-terminus: Ribonucleoside-diphosphate reductase small chain (327 aa).

Fe cation-binding residues include Asp-70, Glu-101, and His-104. Tyr-108 is an active-site residue. Fe cation is bound by residues Glu-164, Glu-198, and His-201.

This sequence belongs to the ribonucleoside diphosphate reductase small chain family. Heterotetramer composed of a homodimer of the large subunit (R1) and a homodimer of the small subunit (R2). Larger multisubunit protein complex are also active, composed of (R1)n(R2)n. Requires Fe cation as cofactor.

It carries out the reaction a 2'-deoxyribonucleoside 5'-diphosphate + [thioredoxin]-disulfide + H2O = a ribonucleoside 5'-diphosphate + [thioredoxin]-dithiol. In terms of biological role, ribonucleoside-diphosphate reductase holoenzyme provides the precursors necessary for viral DNA synthesis. Allows virus growth in non-dividing cells. Catalyzes the biosynthesis of deoxyribonucleotides from the corresponding ribonucleotides. This is Ribonucleoside-diphosphate reductase small chain from African swine fever virus (isolate Tick/Malawi/Lil 20-1/1983) (ASFV).